The sequence spans 226 residues: Ribose-5-phosphate isomerase A (226 aa).

Substrate contacts are provided by residues T28–T31, D83–D86, and K97–G100. Residue E106 is the Proton acceptor of the active site. K124 lines the substrate pocket.

It belongs to the ribose 5-phosphate isomerase family. As to quaternary structure, homotetramer.

It catalyses the reaction aldehydo-D-ribose 5-phosphate = D-ribulose 5-phosphate. It participates in carbohydrate biosynthesis; D-ribose 5-phosphate biosynthesis. Functionally, catalyzes the reversible conversion of ribose-5-phosphate to ribulose 5-phosphate. In Methanocaldococcus jannaschii (strain ATCC 43067 / DSM 2661 / JAL-1 / JCM 10045 / NBRC 100440) (Methanococcus jannaschii), this protein is Ribose-5-phosphate isomerase A.